The following is a 300-amino-acid chain: 4-hydroxy-tetrahydrodipicolinate synthase (300 aa).

Thr-46 lines the pyruvate pocket. The active-site Proton donor/acceptor is Tyr-134. Lys-162 acts as the Schiff-base intermediate with substrate in catalysis. Position 204 (Val-204) interacts with pyruvate.

The protein belongs to the DapA family. In terms of assembly, homotetramer; dimer of dimers.

The protein resides in the cytoplasm. It catalyses the reaction L-aspartate 4-semialdehyde + pyruvate = (2S,4S)-4-hydroxy-2,3,4,5-tetrahydrodipicolinate + H2O + H(+). It participates in amino-acid biosynthesis; L-lysine biosynthesis via DAP pathway; (S)-tetrahydrodipicolinate from L-aspartate: step 3/4. Catalyzes the condensation of (S)-aspartate-beta-semialdehyde [(S)-ASA] and pyruvate to 4-hydroxy-tetrahydrodipicolinate (HTPA). The protein is 4-hydroxy-tetrahydrodipicolinate synthase of Heliobacterium modesticaldum (strain ATCC 51547 / Ice1).